Consider the following 313-residue polypeptide: Ribosomal RNA small subunit methyltransferase H (313 aa).

S-adenosyl-L-methionine-binding positions include 35-37, Asp55, Phe79, Asp100, and Gln107; that span reads GGH.

Belongs to the methyltransferase superfamily. RsmH family.

It is found in the cytoplasm. It carries out the reaction cytidine(1402) in 16S rRNA + S-adenosyl-L-methionine = N(4)-methylcytidine(1402) in 16S rRNA + S-adenosyl-L-homocysteine + H(+). Its function is as follows. Specifically methylates the N4 position of cytidine in position 1402 (C1402) of 16S rRNA. This Burkholderia thailandensis (strain ATCC 700388 / DSM 13276 / CCUG 48851 / CIP 106301 / E264) protein is Ribosomal RNA small subunit methyltransferase H.